A 1097-amino-acid polypeptide reads, in one-letter code: Mitochondrial distribution and morphology protein 34 (1097 aa).

Positions 1–198 (MSFNFKWPTF…LPGIIHRLSQ (198 aa)) constitute an SMP-LTD domain. 8 disordered regions span residues 204–305 (EAKS…PLHS), 317–343 (AAFP…SGFS), 390–427 (QSDD…LDAV), 480–520 (DDQP…TSSL), 556–600 (PEVD…SSRT), 645–675 (LDAE…RDLS), 716–817 (GQNA…SPGV), and 923–1097 (GSSA…AIRE). Residues 205–229 (AKSEKDKVKQKAEAEEPPARSREPT) show a composition bias toward basic and acidic residues. The span at 252-263 (RKSHSKAKKHSR) shows a compositional bias: basic residues. Residues 274–283 (SPCQSPQRPR) are compositionally biased toward low complexity. Basic residues predominate over residues 284-293 (QSPRRPRHVA). Over residues 406–416 (SSSHDGKHDEG) the composition is skewed to basic and acidic residues. Composition is skewed to low complexity over residues 508–519 (SSRSDRSACTSS) and 572–586 (GGTP…RFGS). Polar residues predominate over residues 662–675 (TNPTSRESSYRDLS). Over residues 759 to 779 (GMSATPARTRASAAASARSRP) the composition is skewed to low complexity. The span at 784-796 (YATSPPGDSSGWQ) shows a compositional bias: polar residues. The span at 923 to 943 (GSSAASGTGTTSGSSQTGANA) shows a compositional bias: low complexity. Polar residues predominate over residues 1004–1024 (SNKPNNTSTGQGEDSQDNSAA). The segment covering 1045 to 1059 (ASGSSASSAITDSSS) has biased composition (low complexity).

Belongs to the MDM34 family. In terms of assembly, component of the ER-mitochondria encounter structure (ERMES) or MDM complex, composed of MMM1, MDM10, MDM12 and MDM34.

It is found in the mitochondrion outer membrane. Functionally, component of the ERMES/MDM complex, which serves as a molecular tether to connect the endoplasmic reticulum (ER) and mitochondria. Components of this complex are involved in the control of mitochondrial shape and protein biogenesis, and function in nonvesicular lipid trafficking between the ER and mitochondria. MDM34 is required for the interaction of the ER-resident membrane protein MMM1 and the outer mitochondrial membrane-resident beta-barrel protein MDM10. In Mycosarcoma maydis (Corn smut fungus), this protein is Mitochondrial distribution and morphology protein 34.